We begin with the raw amino-acid sequence, 261 residues long: Kallikrein-1 (261 aa).

An N-terminal signal peptide occupies residues 1–18 (MRFLILFLALSLGGIDAA). A propeptide spans 19–24 (PPVQSR) (activation peptide). A Peptidase S1 domain is found at 25 to 258 (IVGGFNCEKN…FNTWIRETMA (234 aa)). 5 cysteine pairs are disulfide-bonded: Cys31–Cys173, Cys50–Cys66, Cys152–Cys219, Cys184–Cys198, and Cys209–Cys234. The active-site Charge relay system is His65. A glycan (N-linked (GlcNAc...) asparagine) is linked at Asn102. The active-site Charge relay system is Asp120. Ser213 (charge relay system) is an active-site residue.

It belongs to the peptidase S1 family. Kallikrein subfamily.

It carries out the reaction Preferential cleavage of Arg-|-Xaa bonds in small molecule substrates. Highly selective action to release kallidin (lysyl-bradykinin) from kininogen involves hydrolysis of Met-|-Xaa or Leu-|-Xaa.. Glandular kallikreins cleave Met-Lys and Arg-Ser bonds in kininogen to release Lys-bradykinin. The sequence is that of Kallikrein-1 (Klk1) from Mus musculus (Mouse).